A 214-amino-acid chain; its full sequence is Outer-membrane lipoprotein LolB (214 aa).

An N-terminal signal peptide occupies residues 1–30 (MKHVSSPHPCAAIASARVWLGLVLVALLAG). C31 carries the N-palmitoyl cysteine lipid modification. A lipid anchor (S-diacylglycerol cysteine) is attached at C31.

Belongs to the LolB family. Monomer.

The protein resides in the cell outer membrane. Plays a critical role in the incorporation of lipoproteins in the outer membrane after they are released by the LolA protein. This chain is Outer-membrane lipoprotein LolB, found in Chromohalobacter salexigens (strain ATCC BAA-138 / DSM 3043 / CIP 106854 / NCIMB 13768 / 1H11).